The primary structure comprises 1070 residues: MLGDENGEMSTIPGLNQIQFEGFCGFMDRGLTEELYKFPKIEDTEQEIEFQLFVETYQLVEPLIKERDAVYESLTYSSELYVSAGLIWKTSKDMQEQTIFIGNIPLMNSLGTSIVNGIYRIVINQILQSPGIYYRSELDHNGISVYTGTIISDWGGRLELEIDRKARIWARVSRKQKISILVLSSAMGSNLREILENVCYPEIFLSFLTDKEKKKIGSKENAILEFYQQFSCVGGDPVFSESLCKELQKKFFQQRCELGRIGRRNMNQRLNLNIPQNNTFLLPRDILAAADRLIGMKFGMGPLDDMNHLKNKRIRSVADLLQDQFGLALVRLENVVRGTICGAIRHKLIPTPQNLVTSTPLTTTYESFFGLHPLSQVLDRTNPLTQIVHGRKLSYLGPGGLTGRTANFRIRDIHPSHYGRICPIDTSEGINVGLIGSLAIHARIGHWGSLESPFYKIFERSKKAQMLYLSPSRDEYYMVAAGNSLALNQGIQEEQVVPARYRQEFLTIAWEQVHLRSIFPFQYFSIGASLIPFIEHNDANRALMSSNMQRQAVPLSRSEKCIVGTGLERQVALDSGVPAIADHEGKIISTDTDKIILSGNGDALGIPLVMYQRSNKNTCMHQTARVRRGKCIKKGQILADGAATVGGELALGKNVLVAYMPWEGYNFEDAVLISERLVYEDIYTSFHIRKYEIQTHVTSQGPERITNEIPHLEAHLLRNLDKNGIVMLGSWVETGDILVGKLTPQVAKESSYAPEDRLLRAILGIQVSTSKETCLKLPIGGRGRVIDVRWVQKKGGSSYNPETIRVYISQKREIKVGDKVAGRHGNKGIISKILPRQDMPYLQDGRPVDMVFNPLGVPSRMNVGQLFECSLGLAGSLLDRHHRIAPFDERYEQEASRKLVFSELYQASKQTANPWVFEPEYPGKSRIFDGRTGGPFEQPVIIGKPYILKLIHQVDDKIHGRSSGYYALVTQQPLRGRSKQGGQRVGEMEVWALEGFGVAHILQEMLTYKSDHIRARQEVLGTTIIGGTIPKPEDAPESFRLLVRELRSLALELNHFLVSEKNFQINRKEA.

The protein belongs to the RNA polymerase beta chain family. In terms of assembly, in plastids the minimal PEP RNA polymerase catalytic core is composed of four subunits: alpha, beta, beta', and beta''. When a (nuclear-encoded) sigma factor is associated with the core the holoenzyme is formed, which can initiate transcription.

It localises to the plastid. It is found in the chloroplast. It catalyses the reaction RNA(n) + a ribonucleoside 5'-triphosphate = RNA(n+1) + diphosphate. Functionally, DNA-dependent RNA polymerase catalyzes the transcription of DNA into RNA using the four ribonucleoside triphosphates as substrates. This Gossypium barbadense (Sea Island cotton) protein is DNA-directed RNA polymerase subunit beta.